The chain runs to 405 residues: Glutamate-pyruvate aminotransferase AlaA (405 aa).

Glycine 41 and asparagine 179 together coordinate L-alanine. Lysine 240 carries the N6-(pyridoxal phosphate)lysine modification. Arginine 378 serves as a coordination point for L-alanine.

Belongs to the class-I pyridoxal-phosphate-dependent aminotransferase family. Homodimer. Pyridoxal 5'-phosphate serves as cofactor.

It localises to the cytoplasm. It catalyses the reaction L-alanine + 2-oxoglutarate = pyruvate + L-glutamate. It functions in the pathway amino-acid biosynthesis; L-alanine biosynthesis. Involved in the biosynthesis of alanine. Catalyzes the transamination of pyruvate by glutamate, leading to the formation of L-alanine and 2-oxoglutarate. Is also able to catalyze the reverse reaction. This Escherichia coli (strain K12) protein is Glutamate-pyruvate aminotransferase AlaA.